Here is a 120-residue protein sequence, read N- to C-terminus: Chaperonin GroEL (120 aa).

An ATP-binding site is contributed by 23 to 27 (DGTTT).

It belongs to the chaperonin (HSP60) family. As to quaternary structure, forms a cylinder of 14 subunits composed of two heptameric rings stacked back-to-back. Interacts with the co-chaperonin GroES.

The protein resides in the cytoplasm. It carries out the reaction ATP + H2O + a folded polypeptide = ADP + phosphate + an unfolded polypeptide.. In terms of biological role, together with its co-chaperonin GroES, plays an essential role in assisting protein folding. The GroEL-GroES system forms a nano-cage that allows encapsulation of the non-native substrate proteins and provides a physical environment optimized to promote and accelerate protein folding. The polypeptide is Chaperonin GroEL (Mycobacterium malmoense).